Consider the following 345-residue polypeptide: Centromere protein U (345 aa).

Basic residues-rich tracts occupy residues 1–10 (MSSKKRTKRN) and 19–29 (HKGRSHPRRKF). Disordered stretches follow at residues 1 to 37 (MSSK…EPDV) and 64 to 153 (AVDA…SSVQ). Residues 88 to 106 (NAERSEKMLLETPEGDVHE) are compositionally biased toward basic and acidic residues. A compositionally biased stretch (low complexity) spans 142-152 (SDSSVNSPSSV). Positions 201–294 (CSAFEDQVTD…QDYLDYREEN (94 aa)) form a coiled coil. The Nuclear localization signal motif lies at 222-239 (KKKNAKVVADIKKKRQRL).

This sequence belongs to the CENP-U/AME1 family. In terms of assembly, interacts with CENPH-CENPI complex at the kinetochore.

The protein resides in the nucleus. Its subcellular location is the chromosome. It localises to the centromere. In terms of biological role, probable component of a centromeric complex involved in assembly of kinetochore proteins, mitotic progression and chromosome segregation. Required for maintenance of sister chromatid adhesion during mitotic checkpoint activation. The polypeptide is Centromere protein U (CENPU) (Gallus gallus (Chicken)).